The primary structure comprises 99 residues: UPF0045 protein MTH_1187 (99 aa).

It belongs to the UPF0045 family. As to quaternary structure, homotetramer.

In Methanothermobacter thermautotrophicus (strain ATCC 29096 / DSM 1053 / JCM 10044 / NBRC 100330 / Delta H) (Methanobacterium thermoautotrophicum), this protein is UPF0045 protein MTH_1187.